Reading from the N-terminus, the 145-residue chain is Small ribosomal subunit protein eS19 (145 aa).

At K23 the chain carries N6-acetyllysine. R67 is subject to Omega-N-methylarginine. N6-acetyllysine is present on residues K111 and K115. At K143 the chain carries N6-succinyllysine.

Belongs to the eukaryotic ribosomal protein eS19 family. As to quaternary structure, component of the small ribosomal subunit. Part of the small subunit (SSU) processome, composed of more than 70 proteins and the RNA chaperone small nucleolar RNA (snoRNA) U3. Interacts with RPS19BP1.

It is found in the cytoplasm. The protein resides in the nucleus. Its subcellular location is the nucleolus. Functionally, component of the small ribosomal subunit. The ribosome is a large ribonucleoprotein complex responsible for the synthesis of proteins in the cell. Required for pre-rRNA processing and maturation of 40S ribosomal subunits. Part of the small subunit (SSU) processome, first precursor of the small eukaryotic ribosomal subunit. During the assembly of the SSU processome in the nucleolus, many ribosome biogenesis factors, an RNA chaperone and ribosomal proteins associate with the nascent pre-rRNA and work in concert to generate RNA folding, modifications, rearrangements and cleavage as well as targeted degradation of pre-ribosomal RNA by the RNA exosome. The polypeptide is Small ribosomal subunit protein eS19 (Rps19) (Rattus norvegicus (Rat)).